The primary structure comprises 578 residues: Probable arginine--tRNA ligase, mitochondrial (578 aa).

The N-terminal 16 residues, 1–16 (MACGFRRAIACQLSRV), are a transit peptide targeting the mitochondrion. L-arginine-binding positions include 133–135 (SPN), H144, Y322, D326, and Q350. Residues 133–144 (SPNVAKKFHVGH) carry the 'HIGH' region motif. K568 is subject to N6-acetyllysine.

The protein belongs to the class-I aminoacyl-tRNA synthetase family.

The protein resides in the mitochondrion membrane. It carries out the reaction tRNA(Arg) + L-arginine + ATP = L-arginyl-tRNA(Arg) + AMP + diphosphate. Its function is as follows. Catalyzes the attachment of arginine to tRNA(Arg) in a two-step reaction: arginine is first activated by ATP to form Arg-AMP and then transferred to the acceptor end of tRNA(Arg). This Homo sapiens (Human) protein is Probable arginine--tRNA ligase, mitochondrial (RARS2).